Here is a 177-residue protein sequence, read N- to C-terminus: Nucleoside triphosphate/diphosphate phosphatase (177 aa).

The active-site Proton donor is the Arg-24. Positions 88, 104, 106, 108, 121, and 124 each coordinate Mg(2+).

This sequence belongs to the Ntdp family. The cofactor is Mg(2+).

It carries out the reaction a ribonucleoside 5'-triphosphate + H2O = a ribonucleoside 5'-diphosphate + phosphate + H(+). The catalysed reaction is a ribonucleoside 5'-diphosphate + H2O = a ribonucleoside 5'-phosphate + phosphate + H(+). Functionally, has nucleoside phosphatase activity towards nucleoside triphosphates and nucleoside diphosphates. This is Nucleoside triphosphate/diphosphate phosphatase from Geobacillus sp. (strain WCH70).